An 88-amino-acid chain; its full sequence is Cell division topological specificity factor (88 aa).

Belongs to the MinE family.

Prevents the cell division inhibition by proteins MinC and MinD at internal division sites while permitting inhibition at polar sites. This ensures cell division at the proper site by restricting the formation of a division septum at the midpoint of the long axis of the cell. In Aromatoleum aromaticum (strain DSM 19018 / LMG 30748 / EbN1) (Azoarcus sp. (strain EbN1)), this protein is Cell division topological specificity factor.